We begin with the raw amino-acid sequence, 461 residues long: Propionyl-CoA carboxylase regulator (461 aa).

An HTH cro/C1-type domain is found at 11 to 65; sequence LRELRVKLGLTQKVFAERLGASLPYLNQMENNHRPVSATVVLALAQEFGVDVTKL. The H-T-H motif DNA-binding region spans 22 to 41; sequence QKVFAERLGASLPYLNQMEN.

Belongs to the short-chain fatty acyl-CoA assimilation regulator (ScfR) family.

Its function is as follows. Transcriptional regulator that controls propionyl-CoA assimilation through the methylmalonyl-CoA pathway via regulation of pccB expression. The polypeptide is Propionyl-CoA carboxylase regulator (Cereibacter sphaeroides (strain ATCC 17023 / DSM 158 / JCM 6121 / CCUG 31486 / LMG 2827 / NBRC 12203 / NCIMB 8253 / ATH 2.4.1.) (Rhodobacter sphaeroides)).